The sequence spans 307 residues: Nodulation protein NoeC (307 aa).

8 helical membrane-spanning segments follow: residues 46–66 (APLWLAFMTFCSVASGIYVLN), 91–111 (SGLTGVWMCLVLIALGGVCAI), 117–137 (LFAITASYVALSVIYVGKVRG), 140–160 (VLDLFVLSALYTTRILAGATA), 163–183 (IPVPASFLAFSAMAFVSLASI), 212–232 (IVALICVSAGYAAVVFLELFV), 238–258 (AQGPAPIFVSNAMCVVVAYWI), and 279–299 (VTDGSSLVCILGLALGLVFLM).

It is found in the cell membrane. This chain is Nodulation protein NoeC (noeC), found in Azorhizobium caulinodans (strain ATCC 43989 / DSM 5975 / JCM 20966 / LMG 6465 / NBRC 14845 / NCIMB 13405 / ORS 571).